The primary structure comprises 538 residues: NAD(P)H-quinone oxidoreductase chain 4 1 (538 aa).

13 helical membrane passes run 7–27, 37–57, 88–108, 116–136, 137–157, 170–190, 210–230, 244–264, 278–298, 315–335, 336–356, 388–408, and 418–438; these read FPWL…IPII, WYGL…FWHY, LSMP…FAAW, LFYG…VAQD, LLLF…LISI, FILY…ALAF, AIEL…LPIF, SAPG…YALI, FAPV…CCAF, MGFV…GAVL, QMVS…VTYE, LALP…GIAT, and VVVV…LLSM.

This sequence belongs to the complex I subunit 4 family.

It is found in the cellular thylakoid membrane. The enzyme catalyses a plastoquinone + NADH + (n+1) H(+)(in) = a plastoquinol + NAD(+) + n H(+)(out). It catalyses the reaction a plastoquinone + NADPH + (n+1) H(+)(in) = a plastoquinol + NADP(+) + n H(+)(out). In terms of biological role, NDH-1 shuttles electrons from NAD(P)H, via FMN and iron-sulfur (Fe-S) centers, to quinones in the respiratory chain. The immediate electron acceptor for the enzyme in this species is believed to be plastoquinone. Couples the redox reaction to proton translocation (for every two electrons transferred, four hydrogen ions are translocated across the cytoplasmic membrane), and thus conserves the redox energy in a proton gradient. This chain is NAD(P)H-quinone oxidoreductase chain 4 1, found in Nostoc sp. (strain PCC 7120 / SAG 25.82 / UTEX 2576).